A 1448-amino-acid chain; its full sequence is DNA primase TraC (1448 aa).

Basic and acidic residues-rich tracts occupy residues 844–856 (ARVQ…RDPN), 863–872 (SAAKEARKTA), and 882–898 (DAQR…RDRQ). Disordered regions lie at residues 844 to 915 (ARVQ…INVP) and 952 to 982 (QGAA…QQAQ). Positions 964–982 (AQPAPEAQGEAQKPAQQAQ) are enriched in low complexity. The Toprim domain occupies 1237–1325 (PALVISEGYA…GKAIFPIFAP (89 aa)). The disordered stretch occupies residues 1414–1448 (ISQVQRDEQQHQEQKHVEKKQQQIEQRPRRAARIG). A compositionally biased stretch (basic and acidic residues) spans 1418 to 1441 (QRDEQQHQEQKHVEKKQQQIEQRP).

In terms of biological role, required for autonomous replication in E.coli. Transferred into the recipient cell during bacterial conjugation. Catalyzes the synthesis of short oligoribonucleotide primers with CpA or pCpA at their 5'-termini on a single-stranded template DNA. The chain is DNA primase TraC (traC) from Escherichia coli.